The primary structure comprises 269 residues: Hydroxyethylthiazole kinase (269 aa).

Residue M45 participates in substrate binding. Residues R121 and T167 each contribute to the ATP site. Position 194 (G194) interacts with substrate.

The protein belongs to the Thz kinase family. It depends on Mg(2+) as a cofactor.

It carries out the reaction 5-(2-hydroxyethyl)-4-methylthiazole + ATP = 4-methyl-5-(2-phosphooxyethyl)-thiazole + ADP + H(+). Its pathway is cofactor biosynthesis; thiamine diphosphate biosynthesis; 4-methyl-5-(2-phosphoethyl)-thiazole from 5-(2-hydroxyethyl)-4-methylthiazole: step 1/1. Catalyzes the phosphorylation of the hydroxyl group of 4-methyl-5-beta-hydroxyethylthiazole (THZ). This Bacillus cereus (strain ATCC 14579 / DSM 31 / CCUG 7414 / JCM 2152 / NBRC 15305 / NCIMB 9373 / NCTC 2599 / NRRL B-3711) protein is Hydroxyethylthiazole kinase.